Consider the following 488-residue polypeptide: Proline--tRNA ligase (488 aa).

The protein belongs to the class-II aminoacyl-tRNA synthetase family. ProS type 3 subfamily. In terms of assembly, homodimer.

The protein resides in the cytoplasm. It carries out the reaction tRNA(Pro) + L-proline + ATP = L-prolyl-tRNA(Pro) + AMP + diphosphate. Catalyzes the attachment of proline to tRNA(Pro) in a two-step reaction: proline is first activated by ATP to form Pro-AMP and then transferred to the acceptor end of tRNA(Pro). This chain is Proline--tRNA ligase, found in Borreliella burgdorferi (strain ZS7) (Borrelia burgdorferi).